A 57-amino-acid polypeptide reads, in one-letter code: Alpha-conotoxin-like Sm1.2 (57 aa).

An N-terminal signal peptide occupies residues M1–S16. Positions F17–R42 are excised as a propeptide. Residues F17–C46 form a disordered region. Residues S19–D41 are compositionally biased toward basic and acidic residues. 2 disulfides stabilise this stretch: C45–C51 and C46–C56. Cysteine amide is present on C56.

It belongs to the conotoxin A superfamily. As to expression, expressed by the venom duct.

It localises to the secreted. In terms of biological role, alpha-conotoxins act on postsynaptic membranes, they bind to the nicotinic acetylcholine receptors (nAChR) and thus inhibit them. This chain is Alpha-conotoxin-like Sm1.2, found in Conus stercusmuscarum (Fly-specked cone).